A 26-amino-acid chain; its full sequence is Guentherin (26 aa).

As to expression, expressed by the skin glands.

It is found in the secreted. Functionally, antimicrobial peptide. Active against the Gram-positive bacteria S.aureus FDA209P (MIC=35.5 ug/ml) and B.subtilis ATCC 6633 (MIC&gt;64 ug/ml), but not active against the Gram-negative bacterium E.coli or the fungus C.albicans. The chain is Guentherin from Sylvirana guentheri (Gunther's frog).